Consider the following 543-residue polypeptide: MAAKHVIYGEEARAKLKAGVDKLANAVKVTLGPKGREVIIEKKWGVPVVTKDGVTVAKEIELKDQFENIGAQLVKEVASKTADVAGDGTTTATVLAQAIFTEGLKAIASGANPMDLKRGIDEAVALVIEEVKKASIPVTSNKEIEQVATISANNDPVIGKLLAEAMEKVGKDGVITVEESKSSETTLETVQGMQFDRGYLSPYFITDADKMQAVLENPYILIFEKKISNIKELLPVLENVVRVGRSLVIIAEDVEAEALATLVVNTLKGVIRAVAVKAPGFGQRRKDYLEDIAILTGGQAITEDLGIKLESVTLDMLGQAEKVIVDKENTTIVGGKGDKKKVEARIEQIKKQIKETTSDYDREKLQERLAKLSGGVAIIRVGAATESELKEKKARVEDAVHATKAAAEEGIVAGGGTALAKASRVLENYTSANKDRELGVKIVYNACKYPLKQIAYNAGYEGSLVLEKVYEDQDKNYGFDAANGEYKDMVKAGIIDPTKVVRTALQNAASAAGTMLTAEALIAELPEKKEKTPTPTDMPPDFD.

ATP is bound by residues 30-33 (TLGP), Lys51, 87-91 (DGTTT), Gly415, 480-482 (DAA), and Asp496.

Belongs to the chaperonin (HSP60) family. As to quaternary structure, forms a cylinder of 14 subunits composed of two heptameric rings stacked back-to-back. Interacts with the co-chaperonin GroES.

The protein localises to the cytoplasm. It carries out the reaction ATP + H2O + a folded polypeptide = ADP + phosphate + an unfolded polypeptide.. Functionally, together with its co-chaperonin GroES, plays an essential role in assisting protein folding. The GroEL-GroES system forms a nano-cage that allows encapsulation of the non-native substrate proteins and provides a physical environment optimized to promote and accelerate protein folding. The polypeptide is Chaperonin GroEL (Hydrogenobaculum sp. (strain Y04AAS1)).